Here is a 301-residue protein sequence, read N- to C-terminus: Probable alpha-L-glutamate ligase (301 aa).

Positions L104–E287 constitute an ATP-grasp domain. ATP is bound by residues K141, E178 to Y179, D187, and R211 to N213. Residues D248, E260, and N262 each contribute to the Mg(2+) site. 3 residues coordinate Mn(2+): D248, E260, and N262.

The protein belongs to the RimK family. Mg(2+) serves as cofactor. Mn(2+) is required as a cofactor.

This Saccharophagus degradans (strain 2-40 / ATCC 43961 / DSM 17024) protein is Probable alpha-L-glutamate ligase.